The following is a 130-amino-acid chain: Small ribosomal subunit protein uS9 (130 aa).

It belongs to the universal ribosomal protein uS9 family.

The polypeptide is Small ribosomal subunit protein uS9 (Shewanella baltica (strain OS155 / ATCC BAA-1091)).